A 475-amino-acid chain; its full sequence is Exodeoxyribonuclease I (475 aa).

The Exonuclease domain occupies 13–192; sequence FHDYETFGTH…AMADVYATIA (180 aa). Positions 15 and 17 each coordinate Mg(2+). Residues Glu17 and Arg165 each contribute to the substrate site. Asp186 is a Mg(2+) binding site. The ExoI SH3-like domain occupies 202–355; the sequence is PRLFDYLFTH…KVVAIFAEAE (154 aa). The 118-residue stretch at 358–475 folds into the ExoI C-terminal domain; the sequence is TPSDNVDAQL…ALWQYAEEIV (118 aa).

In terms of assembly, monomer. Interacts with ssb (via C-terminus); this interaction stimulates the exonuclease activity by recruiting the enzyme to its substrate. The cofactor is Mg(2+).

It catalyses the reaction Exonucleolytic cleavage in the 3'- to 5'-direction to yield nucleoside 5'-phosphates.. Its activity is regulated as follows. Inhibited by 10 mM EDTA. Functionally, degrades single-stranded DNA (ssDNA) in a highly processive manner. Also functions as a DNA deoxyribophosphodiesterase that releases deoxyribose-phosphate moieties following the cleavage of DNA at an apurinic/apyrimidinic (AP) site by either an AP endonuclease or AP lyase. The chain is Exodeoxyribonuclease I (sbcB) from Escherichia coli (strain K12).